The sequence spans 511 residues: UPF0288 protein MK0796 (511 aa).

This sequence belongs to the UPF0288 family.

This Methanopyrus kandleri (strain AV19 / DSM 6324 / JCM 9639 / NBRC 100938) protein is UPF0288 protein MK0796.